The chain runs to 549 residues: Antagonist of mitotic exit network protein 1 (549 aa).

The span at methionine 1–serine 11 shows a compositional bias: polar residues. The interval methionine 1 to threonine 39 is disordered.

This sequence belongs to the AMN1 family. As to quaternary structure, interacts with TEM1.

The protein resides in the cytoplasm. The protein localises to the nucleus. Negative regulator of the mitotic exit network (MEN), required for multiple cell cycle checkpoints. Acts in the daughter cell to inhibit the mitotic exit pathway once MEN has executed its function. Through its binding ability to TEM1, interferes with the TEM1-CDC5 association, required for CDC5 kinase activation and MEN activation. Required for daughter cell separation and chromosome stability. Involved in copper sensitivity. The protein is Antagonist of mitotic exit network protein 1 (AMN1) of Saccharomyces cerevisiae (strain ATCC 204508 / S288c) (Baker's yeast).